The primary structure comprises 420 residues: tRNA(Ile)-lysidine synthase, chloroplastic (420 aa).

ATP is bound at residue Ser-63–Ser-68.

It belongs to the tRNA(Ile)-lysidine synthase family.

Its subcellular location is the plastid. It localises to the chloroplast. The catalysed reaction is cytidine(34) in tRNA(Ile2) + L-lysine + ATP = lysidine(34) in tRNA(Ile2) + AMP + diphosphate + H(+). Ligates lysine onto the cytidine present at position 34 of the AUA codon-specific tRNA(Ile) that contains the anticodon CAU, in an ATP-dependent manner. Cytidine is converted to lysidine, thus changing the amino acid specificity of the tRNA from methionine to isoleucine. The sequence is that of tRNA(Ile)-lysidine synthase, chloroplastic from Zygnema circumcarinatum (Green alga).